We begin with the raw amino-acid sequence, 300 residues long: 4-hydroxy-tetrahydrodipicolinate synthase (300 aa).

Thr-45 serves as a coordination point for pyruvate. The Proton donor/acceptor role is filled by Tyr-140. Lys-169 (schiff-base intermediate with substrate) is an active-site residue. A pyruvate-binding site is contributed by Ile-210.

It belongs to the DapA family. In terms of assembly, homotetramer; dimer of dimers.

Its subcellular location is the cytoplasm. It carries out the reaction L-aspartate 4-semialdehyde + pyruvate = (2S,4S)-4-hydroxy-2,3,4,5-tetrahydrodipicolinate + H2O + H(+). Its pathway is amino-acid biosynthesis; L-lysine biosynthesis via DAP pathway; (S)-tetrahydrodipicolinate from L-aspartate: step 3/4. In terms of biological role, catalyzes the condensation of (S)-aspartate-beta-semialdehyde [(S)-ASA] and pyruvate to 4-hydroxy-tetrahydrodipicolinate (HTPA). The sequence is that of 4-hydroxy-tetrahydrodipicolinate synthase from Helicobacter pylori (strain G27).